A 147-amino-acid chain; its full sequence is Myoglobin (147 aa).

The region spanning 2–141 (ADFDMVLKCW…IIADMEADYK (140 aa)) is the Globin domain. His60 is a binding site for nitrite. Residue His60 participates in O2 binding. His89 contributes to the heme b binding site.

Belongs to the globin family. Monomeric.

Its subcellular location is the cytoplasm. The protein localises to the sarcoplasm. The catalysed reaction is Fe(III)-heme b-[protein] + nitric oxide + H2O = Fe(II)-heme b-[protein] + nitrite + 2 H(+). It carries out the reaction H2O2 + AH2 = A + 2 H2O. Monomeric heme protein which primary function is to store oxygen and facilitate its diffusion within muscle tissues. Reversibly binds oxygen through a pentacoordinated heme iron and enables its timely and efficient release as needed during periods of heightened demand. Depending on the oxidative conditions of tissues and cells, and in addition to its ability to bind oxygen, it also has a nitrite reductase activity whereby it regulates the production of bioactive nitric oxide. Under stress conditions, like hypoxia and anoxia, it also protects cells against reactive oxygen species thanks to its pseudoperoxidase activity. This Pseudochaenichthys georgianus (South Georgia icefish) protein is Myoglobin (mb).